A 111-amino-acid chain; its full sequence is Short neuropeptide F (111 aa).

The first 24 residues, 1-24 (MSAMYAKRCAALVLLVVTVGLVNA), serve as a signal peptide directing secretion. Positions 25–76 (TENYMDYGEEMAEKTPAENIHELYRLLLQRNTLDNAGFGGIPLEHLMIRKSQ) are excised as a propeptide. Position 85 is a phenylalanine amide (phenylalanine 85). Residues 88–111 (SGPHVSARALPRPMGAVAGYDDNN) constitute a propeptide that is removed on maturation.

Expressed throughout the central nervous system (at protein level).

The protein localises to the secreted. In terms of biological role, plays a role in controlling food intake and regulating body size. The chain is Short neuropeptide F from Camponotus floridanus (Florida carpenter ant).